The sequence spans 406 residues: MNETPKPNSFRSGPDEDGRFGIYGGRFVAETLMPLILDLQDEWNKAKTDPAFQAELQHLGAHYIGRPSPLYFAERLTAELGGAKIYFKREELNHTGSHKINNCIGQILLAKRMGKTRIIAETGAGQHGVASATVAARFGLPCVVYMGATDVERQAPNVFRMKLLGAEVKPVTAGSGTLKDAMNEALRDWVTNVEDTYYLIGTAAGPHPYPEMVRDFQSVIGAEAKEQMLAAEGRLPDLVVAAVGGGSNAIGIFHPFLDDPSVKIVGVEAGGKGLQGDEHCASITAGSPGVLHGNRTYLLQDGDGQIKEGHSISAGLDYPGIGPEHSWLSDIGRVDYVPIMDHEALEAFQTLTRLEGIIPALEAAHAIAEVIKRAPTMSKDEIILMNLSGRGDKDIFTVGKILGMGL.

At Lys99 the chain carries N6-(pyridoxal phosphate)lysine.

It belongs to the TrpB family. In terms of assembly, tetramer of two alpha and two beta chains. It depends on pyridoxal 5'-phosphate as a cofactor.

The enzyme catalyses (1S,2R)-1-C-(indol-3-yl)glycerol 3-phosphate + L-serine = D-glyceraldehyde 3-phosphate + L-tryptophan + H2O. The protein operates within amino-acid biosynthesis; L-tryptophan biosynthesis; L-tryptophan from chorismate: step 5/5. Its function is as follows. The beta subunit is responsible for the synthesis of L-tryptophan from indole and L-serine. The sequence is that of Tryptophan synthase beta chain from Rhizobium etli (strain CIAT 652).